The primary structure comprises 364 residues: Probable cysteine protease RDL4 (364 aa).

The first 23 residues, 1 to 23 (MGSAKSAMLILLVAMVIASCATA), serve as a signal peptide directing secretion. The propeptide at 24-136 (IDMSVVSYDD…DRYKTSADDV (113 aa)) is activation peptide. Residue Asn87 is glycosylated (N-linked (GlcNAc...) asparagine). 3 disulfide bridges follow: Cys158-Cys199, Cys192-Cys232, and Cys291-Cys342. Residue Cys161 is part of the active site. Catalysis depends on residues His297 and Asn317.

This sequence belongs to the peptidase C1 family. In terms of tissue distribution, expressed in inflorescences.

Functionally, probable thiol protease. This chain is Probable cysteine protease RDL4, found in Arabidopsis thaliana (Mouse-ear cress).